Reading from the N-terminus, the 181-residue chain is Large ribosomal subunit protein uL5 (181 aa).

The protein belongs to the universal ribosomal protein uL5 family. In terms of assembly, part of the 50S ribosomal subunit; contacts the 5S rRNA and probably tRNA. Forms a bridge to the 30S subunit in the 70S ribosome.

This is one of the proteins that bind and probably mediate the attachment of the 5S RNA into the large ribosomal subunit, where it forms part of the central protuberance. In the 70S ribosome it contacts protein S13 of the 30S subunit (bridge B1b), connecting the 2 subunits; this bridge is implicated in subunit movement. May contact the P site tRNA; the 5S rRNA and some of its associated proteins might help stabilize positioning of ribosome-bound tRNAs. This is Large ribosomal subunit protein uL5 from Methanococcus maripaludis (strain C5 / ATCC BAA-1333).